The sequence spans 166 residues: Bacterial non-heme ferritin (166 aa).

Positions 2–145 (LSKDLLEALN…THIDYLNRIG (144 aa)) constitute a Ferritin-like diiron domain. E17, E50, H53, E94, and Q127 together coordinate Fe cation.

The protein belongs to the ferritin family. Prokaryotic subfamily.

It is found in the cytoplasm. The catalysed reaction is 4 Fe(2+) + O2 + 6 H2O = 4 iron(III) oxide-hydroxide + 12 H(+). In terms of biological role, iron-storage protein. This is Bacterial non-heme ferritin (ftnA) from Staphylococcus haemolyticus (strain JCSC1435).